Consider the following 357-residue polypeptide: Serpentine receptor class epsilon-31 (357 aa).

Helical transmembrane passes span 28 to 48 (VISIFELLSYILCGYILNLSI), 61 to 81 (LMFLTVPLFAIWYELIIGKFI), 121 to 141 (LLIFGGFLQWHTIYSIVFGIL), 165 to 185 (IPIFLIIICQVLAIFMTFIVI), 192 to 212 (IIARLPFIFLCPISFAVWLFV), 253 to 273 (LVAVVLVYIMVCFLGIVSLTF), and 283 to 303 (FVENFLFFHPIPICLTAMFSI).

Belongs to the nematode receptor-like protein sre family.

It is found in the membrane. This chain is Serpentine receptor class epsilon-31 (sre-31), found in Caenorhabditis elegans.